The following is a 212-amino-acid chain: Pyridoxine/pyridoxamine 5'-phosphate oxidase (212 aa).

Residues 7–10 (RAKY) and Lys-65 contribute to the substrate site. FMN is bound by residues 60–65 (RTVLLK), 75–76 (FT), Lys-82, and Gln-104. The substrate site is built by Tyr-122, Arg-126, and Ser-130. Residues 139-140 (QS) and Trp-184 each bind FMN. 190–192 (RLH) provides a ligand contact to substrate. Arg-194 contributes to the FMN binding site.

This sequence belongs to the pyridoxamine 5'-phosphate oxidase family. In terms of assembly, homodimer. It depends on FMN as a cofactor.

The enzyme catalyses pyridoxamine 5'-phosphate + O2 + H2O = pyridoxal 5'-phosphate + H2O2 + NH4(+). It carries out the reaction pyridoxine 5'-phosphate + O2 = pyridoxal 5'-phosphate + H2O2. Its pathway is cofactor metabolism; pyridoxal 5'-phosphate salvage; pyridoxal 5'-phosphate from pyridoxamine 5'-phosphate: step 1/1. It functions in the pathway cofactor metabolism; pyridoxal 5'-phosphate salvage; pyridoxal 5'-phosphate from pyridoxine 5'-phosphate: step 1/1. In terms of biological role, catalyzes the oxidation of either pyridoxine 5'-phosphate (PNP) or pyridoxamine 5'-phosphate (PMP) into pyridoxal 5'-phosphate (PLP). In Aliarcobacter butzleri (strain RM4018) (Arcobacter butzleri), this protein is Pyridoxine/pyridoxamine 5'-phosphate oxidase.